Consider the following 202-residue polypeptide: Glycerol-3-phosphate acyltransferase (202 aa).

A run of 6 helical transmembrane segments spans residues 2 to 22 (MIVI…GYVI), 54 to 74 (FLVT…PLWL), 88 to 108 (NGLI…YLGF), 120 to 140 (VILG…FGIL), 141 to 161 (YLTK…VIGA), and 162 to 182 (LLIR…LLII).

This sequence belongs to the PlsY family. In terms of assembly, probably interacts with PlsX.

It localises to the cell membrane. It carries out the reaction an acyl phosphate + sn-glycerol 3-phosphate = a 1-acyl-sn-glycero-3-phosphate + phosphate. It functions in the pathway lipid metabolism; phospholipid metabolism. Functionally, catalyzes the transfer of an acyl group from acyl-phosphate (acyl-PO(4)) to glycerol-3-phosphate (G3P) to form lysophosphatidic acid (LPA). This enzyme utilizes acyl-phosphate as fatty acyl donor, but not acyl-CoA or acyl-ACP. The sequence is that of Glycerol-3-phosphate acyltransferase from Staphylococcus saprophyticus subsp. saprophyticus (strain ATCC 15305 / DSM 20229 / NCIMB 8711 / NCTC 7292 / S-41).